A 161-amino-acid polypeptide reads, in one-letter code: Nucleotide-binding protein Pcar_0033 (161 aa).

Belongs to the YajQ family.

Functionally, nucleotide-binding protein. This chain is Nucleotide-binding protein Pcar_0033, found in Syntrophotalea carbinolica (strain DSM 2380 / NBRC 103641 / GraBd1) (Pelobacter carbinolicus).